A 211-amino-acid polypeptide reads, in one-letter code: 3,4-dihydroxy-2-butanone 4-phosphate synthase (211 aa).

D-ribulose 5-phosphate is bound by residues 37-38, aspartate 42, 150-154, and glutamate 174; these read RE and RIGHT. Residue glutamate 38 coordinates Mg(2+). Residue histidine 153 participates in Mg(2+) binding.

This sequence belongs to the DHBP synthase family. In terms of assembly, homodimer. Mg(2+) is required as a cofactor. It depends on Mn(2+) as a cofactor.

It catalyses the reaction D-ribulose 5-phosphate = (2S)-2-hydroxy-3-oxobutyl phosphate + formate + H(+). It functions in the pathway cofactor biosynthesis; riboflavin biosynthesis; 2-hydroxy-3-oxobutyl phosphate from D-ribulose 5-phosphate: step 1/1. Functionally, catalyzes the conversion of D-ribulose 5-phosphate to formate and 3,4-dihydroxy-2-butanone 4-phosphate. In Buchnera aphidicola subsp. Baizongia pistaciae (strain Bp), this protein is 3,4-dihydroxy-2-butanone 4-phosphate synthase.